The primary structure comprises 275 residues: 3-methyl-2-oxobutanoate hydroxymethyltransferase (275 aa).

2 residues coordinate Mg(2+): Asp49 and Asp88. 3-methyl-2-oxobutanoate contacts are provided by residues 49–50 (DS), Asp88, and Lys118. Residue Glu120 participates in Mg(2+) binding. Catalysis depends on Glu187, which acts as the Proton acceptor.

Belongs to the PanB family. Homodecamer; pentamer of dimers. The cofactor is Mg(2+).

It is found in the cytoplasm. The enzyme catalyses 3-methyl-2-oxobutanoate + (6R)-5,10-methylene-5,6,7,8-tetrahydrofolate + H2O = 2-dehydropantoate + (6S)-5,6,7,8-tetrahydrofolate. The protein operates within cofactor biosynthesis; (R)-pantothenate biosynthesis; (R)-pantoate from 3-methyl-2-oxobutanoate: step 1/2. Catalyzes the reversible reaction in which hydroxymethyl group from 5,10-methylenetetrahydrofolate is transferred onto alpha-ketoisovalerate to form ketopantoate. This Brucella melitensis biotype 1 (strain ATCC 23456 / CCUG 17765 / NCTC 10094 / 16M) protein is 3-methyl-2-oxobutanoate hydroxymethyltransferase.